The following is a 325-amino-acid chain: Exogastrula-inducing polypeptide (325 aa).

A signal peptide spans 1–19 (MKVSLVLLIAVFGLAMVAA). A propeptide spanning residues 20 to 45 (EETLESKLQMALKSLLQENEELNLEG) is cleaved from the precursor. EGF-like domains lie at 48 to 91 (TKGG…SSCY) and 107 to 154 (TVAR…GGCS). 6 cysteine pairs are disulfide-bonded: Cys52–Cys65, Cys59–Cys75, Cys77–Cys90, Cys111–Cys124, Cys118–Cys138, and Cys140–Cys153. Positions 160–177 (ELEYLSYVARDVEMEMLA) are excised as a propeptide. An EGF-like 3 domain is found at 180-226 (SVYQCNRDTNSCDGFGKCEKSTFGRTTGQYICNCDDGYRNNAYGGCS). 3 disulfide bridges follow: Cys184–Cys197, Cys191–Cys211, and Cys213–Cys225. Residues 232–249 (EIEYLSMIARDQELEMQA) constitute a propeptide that is removed on maturation. Residues 252–298 (SLPQCNRDTNYCDGFGQCVKSTFGRTTGQYICSCNDGYENNLYGGCS) form the EGF-like 4 domain. Cystine bridges form between Cys256-Cys269, Cys263-Cys283, and Cys285-Cys297. The propeptide occupies 313 to 325 (MEILRSLANLLEE).

The protein localises to the secreted. The protein resides in the extracellular space. Its subcellular location is the extracellular matrix. Its function is as follows. The EGIP peptides are factors effective to extrude the archenteron toward outside of embryos. May have a role in the induction of gastrulation. This chain is Exogastrula-inducing polypeptide, found in Heliocidaris crassispina (Sea urchin).